The following is a 72-amino-acid chain: Translation initiation factor IF-1 (72 aa).

The 72-residue stretch at 1–72 (MSKEEAIEVE…TRGRITYRAK (72 aa)) folds into the S1-like domain.

This sequence belongs to the IF-1 family. Component of the 30S ribosomal translation pre-initiation complex which assembles on the 30S ribosome in the order IF-2 and IF-3, IF-1 and N-formylmethionyl-tRNA(fMet); mRNA recruitment can occur at any time during PIC assembly.

Its subcellular location is the cytoplasm. In terms of biological role, one of the essential components for the initiation of protein synthesis. Stabilizes the binding of IF-2 and IF-3 on the 30S subunit to which N-formylmethionyl-tRNA(fMet) subsequently binds. Helps modulate mRNA selection, yielding the 30S pre-initiation complex (PIC). Upon addition of the 50S ribosomal subunit IF-1, IF-2 and IF-3 are released leaving the mature 70S translation initiation complex. This is Translation initiation factor IF-1 from Geobacter sulfurreducens (strain ATCC 51573 / DSM 12127 / PCA).